Reading from the N-terminus, the 98-residue chain is Large ribosomal subunit protein uL23 (98 aa).

The protein belongs to the universal ribosomal protein uL23 family. Part of the 50S ribosomal subunit. Contacts protein L29, and trigger factor when it is bound to the ribosome.

Its function is as follows. One of the early assembly proteins it binds 23S rRNA. One of the proteins that surrounds the polypeptide exit tunnel on the outside of the ribosome. Forms the main docking site for trigger factor binding to the ribosome. This is Large ribosomal subunit protein uL23 from Dinoroseobacter shibae (strain DSM 16493 / NCIMB 14021 / DFL 12).